The sequence spans 401 residues: Nodulation protein E (401 aa).

The 399-residue stretch at 2 to 400 folds into the Ketosynthase family 3 (KS3) domain; the sequence is DRRVVITGMG…GTNAVLAFKQ (399 aa). Residues cysteine 161, histidine 293, and histidine 330 each act as for beta-ketoacyl synthase activity in the active site. The chain crosses the membrane as a helical span at residues 328–347; it reads HAHCIGAASALEMIACVMAI.

Belongs to the thiolase-like superfamily. Beta-ketoacyl-ACP synthases family.

Its subcellular location is the cell inner membrane. Its function is as follows. Proposed to synthesize NOD factor fatty acyl chain. Involved in the synthesis of a highly unsaturated fatty acid moiety, which forms part of a lipo-oligosaccharide that is responsible for host specificity. This is Nodulation protein E (nodE) from Rhizobium meliloti (Ensifer meliloti).